The following is a 776-amino-acid chain: General transcription and DNA repair factor IIH helicase subunit XPD (776 aa).

The 271-residue stretch at 7–277 (DLLVYFPYSY…KKVDEKRLKD (271 aa)) folds into the Helicase ATP-binding domain. 42–49 (MPSGTGKT) contributes to the ATP binding site. 4 residues coordinate [4Fe-4S] cluster: Cys115, Cys133, Cys150, and Cys184. Positions 228–231 (DEAH) match the DEAH box motif. The tract at residues 736–776 (HVEKQSTSKPPQQQNSAINSTITTSTTTTTTTSTISETHLT) is disordered. Positions 742–754 (TSKPPQQQNSAIN) are enriched in polar residues. Residues 755–776 (STITTSTTTTTTTSTISETHLT) show a composition bias toward low complexity.

It belongs to the helicase family. RAD3/XPD subfamily. In terms of assembly, component of the 7-subunit TFIIH core complex composed of XPB/repB, XPD/repD, gtf2h1, gtf2h2, gtf2h3, gtf2h4 and gtf2h5, which is active in NER. The core complex associates with the 3-subunit CDK-activating kinase (CAK) module composed of cycH/cyclin H, cdk7 and mnat1 to form the 10-subunit holoenzyme (holo-TFIIH) active in transcription. The cofactor is Mg(2+). [4Fe-4S] cluster is required as a cofactor.

The protein resides in the nucleus. It catalyses the reaction Couples ATP hydrolysis with the unwinding of duplex DNA at the replication fork by translocating in the 5'-3' direction. This creates two antiparallel DNA single strands (ssDNA). The leading ssDNA polymer is the template for DNA polymerase III holoenzyme which synthesizes a continuous strand.. It carries out the reaction ATP + H2O = ADP + phosphate + H(+). Its function is as follows. ATP-dependent 5'-3' DNA helicase, component of the general transcription and DNA repair factor IIH (TFIIH) core complex, which is involved in general and transcription-coupled nucleotide excision repair (NER) of damaged DNA and, when complexed to CDK-activating kinase (CAK), in transcription by RNA polymerase II. In NER, TFIIH acts by opening DNA around the lesion to allow the excision of the damaged oligonucleotide and its replacement by a new DNA fragment. The ATP-dependent helicase activity of XPD/repD is required for DNA opening. In transcription, TFIIH has an essential role in transcription initiation. When the pre-initiation complex (PIC) has been established, TFIIH is required for promoter opening and promoter escape. Phosphorylation of the C-terminal tail (CTD) of the largest subunit of RNA polymerase II by the kinase module CAK controls the initiation of transcription. XPD/repD acts by forming a bridge between CAK and the core-TFIIH complex. This Dictyostelium discoideum (Social amoeba) protein is General transcription and DNA repair factor IIH helicase subunit XPD.